The primary structure comprises 98 residues: NADH-ubiquinone oxidoreductase chain 4L (98 aa).

3 consecutive transmembrane segments (helical) span residues 1-21 (MPSI…GMLV), 29-49 (SLLC…LTAL), and 61-81 (IILL…LVMV).

Belongs to the complex I subunit 4L family. As to quaternary structure, core subunit of respiratory chain NADH dehydrogenase (Complex I) which is composed of 45 different subunits.

The protein localises to the mitochondrion inner membrane. It carries out the reaction a ubiquinone + NADH + 5 H(+)(in) = a ubiquinol + NAD(+) + 4 H(+)(out). Functionally, core subunit of the mitochondrial membrane respiratory chain NADH dehydrogenase (Complex I) which catalyzes electron transfer from NADH through the respiratory chain, using ubiquinone as an electron acceptor. Part of the enzyme membrane arm which is embedded in the lipid bilayer and involved in proton translocation. The protein is NADH-ubiquinone oxidoreductase chain 4L (MT-ND4L) of Oryctolagus cuniculus (Rabbit).